Reading from the N-terminus, the 748-residue chain is Cysteine--tRNA ligase, cytoplasmic (748 aa).

The segment at 1 to 25 (MADSSGQQGKGRRVQPQWSPPAGTQ) is disordered. The residue at position 2 (A2) is an N-acetylalanine. Position 19 is a phosphoserine (S19). C55 lines the Zn(2+) pocket. Position 56 (G56) interacts with L-cysteine. The 'HIGH' region signature appears at 57–67 (PTVYDASHMGH). R79 is modified (phosphoserine). Position 96 (T96) interacts with L-cysteine. The 'KIIK' region signature appears at 101–104 (KIIK). Phosphoserine is present on residues S305 and S307. C348, H373, and E377 together coordinate Zn(2+). H373 contributes to the L-cysteine binding site. The 'KMSKS' region motif lies at 406-410 (KMSKS). Residue K409 coordinates ATP. Position 503 is an N6-acetyllysine (K503). A compositionally biased stretch (basic and acidic residues) spans 653-679 (EKRRVEEEKRKKKEEAARRKQEQEAAK). The tract at residues 653–686 (EKRRVEEEKRKKKEEAARRKQEQEAAKLAKMKIP) is disordered. S746 is modified (phosphoserine).

Belongs to the class-I aminoacyl-tRNA synthetase family. As to quaternary structure, homodimer. Requires Zn(2+) as cofactor.

It localises to the cytoplasm. It carries out the reaction tRNA(Cys) + L-cysteine + ATP = L-cysteinyl-tRNA(Cys) + AMP + diphosphate. Its function is as follows. Catalyzes the ATP-dependent ligation of cysteine to tRNA(Cys). This Homo sapiens (Human) protein is Cysteine--tRNA ligase, cytoplasmic.